Consider the following 138-residue polypeptide: MATLQCRVVSAREELYSGEISMLIATGTEGEIGVLPGHTPLITLLKPGAMRVQTPDGEEEVIYVSGGVLEVQPKMVTVLADTAMRAHNLDESKIVEARKKAEQMLVNQSDTVQTNAALASLAESVAQLQTIRKYKNRA.

It belongs to the ATPase epsilon chain family. As to quaternary structure, F-type ATPases have 2 components, CF(1) - the catalytic core - and CF(0) - the membrane proton channel. CF(1) has five subunits: alpha(3), beta(3), gamma(1), delta(1), epsilon(1). CF(0) has three main subunits: a, b and c.

The protein localises to the cell inner membrane. Its function is as follows. Produces ATP from ADP in the presence of a proton gradient across the membrane. The polypeptide is ATP synthase epsilon chain (Psychrobacter cryohalolentis (strain ATCC BAA-1226 / DSM 17306 / VKM B-2378 / K5)).